The sequence spans 73 residues: Protein RALF-like 10 (73 aa).

The signal sequence occupies residues 1 to 17 (MKALVICLLVIFAAVIA). Cystine bridges form between cysteine 35–cysteine 44 and cysteine 64–cysteine 70.

This sequence belongs to the plant rapid alkalinization factor (RALF) family. Expressed in flowers.

The protein localises to the secreted. Cell signaling peptide that may regulate plant stress, growth, and development. Mediates a rapid alkalinization of extracellular space by mediating a transient increase in the cytoplasmic Ca(2+) concentration leading to a calcium-dependent signaling events through a cell surface receptor and a concomitant activation of some intracellular mitogen-activated protein kinases. This is Protein RALF-like 10 (RALFL10) from Arabidopsis thaliana (Mouse-ear cress).